Here is a 342-residue protein sequence, read N- to C-terminus: MTEAIKTDVLIVGAGPCGLFAVFELGLLDIKVHLVDILDKVGGQCAELYPEKPIYDIPGIPMITGHGLTESLMEQIKPFNPTIHLNEMIESVEKIGDPEFRVITNAGTVFECKVLVVAAGGGSFQPKRPPVPGVEAYEGKSVHYAVRKMEEFRGKDIVIVGGGDSALDWTLNLNPICKSMTLVHRRDDFRGAPHSVEQMRQLVASGKLDLKIGQITELQGDNGQLSGATIKLNDNSVAQIKCDAMLPFFGLTMKLGPVANWGLQLENNLIPVDTGTFETNVPGIFAIGDINTYPGKLKLILSGFHEGALMAQKAVKYVYPDKRVVFQYTTSSTNLQKKLGVN.

FAD is bound by residues cysteine 17, aspartate 36, glutamine 44, tyrosine 49, isoleucine 89, phenylalanine 124, aspartate 289, and threonine 330.

This sequence belongs to the ferredoxin--NADP reductase type 2 family. As to quaternary structure, homodimer. FAD serves as cofactor.

The catalysed reaction is 2 reduced [2Fe-2S]-[ferredoxin] + NADP(+) + H(+) = 2 oxidized [2Fe-2S]-[ferredoxin] + NADPH. The protein is Ferredoxin--NADP reductase of Rhodopseudomonas palustris (strain BisB5).